The chain runs to 215 residues: Ras-related protein Rab-5A (215 aa).

Positions 29, 30, 32, 33, 34, 35, 46, 47, 52, and 78 each coordinate GTP. Ser-34 is a binding site for Mg(2+). 2 short sequence motifs (switch) span residues 44–56 (QFHE…IGAA) and 77–93 (AGQE…YRGA). A Mg(2+)-binding site is contributed by Thr-52. Ser-84 carries the post-translational modification Phosphoserine; by LRRK2. (Microbial infection) N-beta-linked (GlcNAc) arginine glycosylation occurs at Arg-120. Positions 133, 134, 136, 164, and 165 each coordinate GTP. Positions 181 to 215 (LPKNEPQNPGANSARGRGVDLTEPTQPTRNQCCSN) are disordered. Over residues 203–215 (EPTQPTRNQCCSN) the composition is skewed to polar residues. Residues Cys-212 and Cys-213 are each lipidated (S-geranylgeranyl cysteine).

It belongs to the small GTPase superfamily. Rab family. Interacts with SGSM1 and SGSM3. Interacts with PIK3CB. Interacts with GDI1; this promotes dissociation from membranes; phosphorylation at Ser-84 disrupts this interaction. Interacts with GDI2; phosphorylation at Ser-84 disrupts the interaction. Interacts with EEA1. Interacts with RIN1 and GAPVD1, which regulate its pathway, probably by acting as a GEF. Interacts with RINL. Interacts with ALS2CL, SUN2, ZFYVE20 and RUFY1. Interacts with RABEP1; one RABEP1 homodimer binds two RAB5A chains, but at opposite sides of the dimer. Interacts with OCRL. Interacts with INPP5F. May be a component of a complex composed of RAB5A, DYN2 and PIK3C3. Does not interact with BLOC-3 complex (heterodimer of HPS1 and HPS4). Interacts with CLN5. Interacts with APPL2. Interacts with F8A1/F8A2/F8A3. Found in a complex with F8A1/F8A2/F8A3, HTT and RAB5A; mediates the recruitment of HTT by RAB5A onto early endosomes. Interacts with ATP9A. Interacts with PPP1R21; mediates the recruitment of FERRY complex by RAB5A onto early endosomes. It depends on Mg(2+) as a cofactor. Post-translationally, phosphorylation of Ser-84 in the switch II region by LRRK2 prevents the association of RAB regulatory proteins, including RAB GDP dissociation inhibitors GDI1 and GDI2. In terms of processing, (Microbial infection) Glycosylated on arginine residues by S.typhimurium protein Ssek3.

The protein localises to the cell membrane. It localises to the early endosome membrane. Its subcellular location is the melanosome. The protein resides in the cytoplasmic vesicle. It is found in the cell projection. The protein localises to the ruffle. It localises to the membrane. Its subcellular location is the cytoplasm. The protein resides in the cytosol. It is found in the phagosome membrane. The protein localises to the endosome membrane. It catalyses the reaction GTP + H2O = GDP + phosphate + H(+). Its activity is regulated as follows. Regulated by guanine nucleotide exchange factors (GEFs) including RINL, which promote the exchange of bound GDP for free GTP. Regulated by GTPase activating proteins (GAPs) which increase the GTP hydrolysis activity. Inhibited by GDP dissociation inhibitors (GDIs). Its function is as follows. The small GTPases Rab are key regulators of intracellular membrane trafficking, from the formation of transport vesicles to their fusion with membranes. Rabs cycle between an inactive GDP-bound form and an active GTP-bound form that is able to recruit to membranes different sets of downstream effectors directly responsible for vesicle formation, movement, tethering and fusion. RAB5A is required for the fusion of plasma membranes and early endosomes. Contributes to the regulation of filopodia extension. Required for the exosomal release of SDCBP, CD63, PDCD6IP and syndecan. Regulates maturation of apoptotic cell-containing phagosomes, probably downstream of DYN2 and PIK3C3. The chain is Ras-related protein Rab-5A from Homo sapiens (Human).